Consider the following 301-residue polypeptide: Putative ribosomal RNA methyltransferase PB17E12.10c (301 aa).

S-adenosyl-L-methionine contacts are provided by Gly87, Trp89, Asp107, and Asp186. Residue Lys247 is the Proton acceptor of the active site.

It belongs to the class I-like SAM-binding methyltransferase superfamily. RNA methyltransferase RlmE family.

The catalysed reaction is a uridine in rRNA + S-adenosyl-L-methionine = a 2'-O-methyluridine in rRNA + S-adenosyl-L-homocysteine + H(+). This chain is Putative ribosomal RNA methyltransferase PB17E12.10c, found in Schizosaccharomyces pombe (strain 972 / ATCC 24843) (Fission yeast).